The following is a 634-amino-acid chain: Ankyrin repeat protein OPG025 (634 aa).

ANK repeat units lie at residues 36-69 (DGET…YKNI), 70-100 (NDFD…EINS), 103-134 (NGIN…PTCS), 175-211 (MGKT…EMRY), 307-337 (IQDL…TLYR), and 412-441 (HGCS…DINI).

Belongs to the orthopoxvirus OPG025 family. In terms of assembly, interacts with components of host SCF complex CUL1 and SKP1 and components of the cullin deneddylation/COP9 signalosome complex subunits COPS7A and COPS7B.

Functionally, plays a role in the inhibition of host immune repsonse by counteracting the action of interferons on early events in the viral replication cycle. The protein is Ankyrin repeat protein OPG025 (OPG035) of Vaccinia virus (strain Western Reserve) (VACV).